Here is a 699-residue protein sequence, read N- to C-terminus: Elongation factor G (699 aa).

The tr-type G domain maps to 8–283 (EHIRNIGICA…AVVDFLPSPI (276 aa)). GTP contacts are provided by residues 17-24 (AHIDAGKT), 81-85 (DTPGH), and 135-138 (NKMD).

Belongs to the TRAFAC class translation factor GTPase superfamily. Classic translation factor GTPase family. EF-G/EF-2 subfamily.

The protein localises to the cytoplasm. Catalyzes the GTP-dependent ribosomal translocation step during translation elongation. During this step, the ribosome changes from the pre-translocational (PRE) to the post-translocational (POST) state as the newly formed A-site-bound peptidyl-tRNA and P-site-bound deacylated tRNA move to the P and E sites, respectively. Catalyzes the coordinated movement of the two tRNA molecules, the mRNA and conformational changes in the ribosome. This chain is Elongation factor G, found in Rickettsia africae (strain ESF-5).